A 177-amino-acid chain; its full sequence is Probable inosine/xanthosine triphosphatase (177 aa).

Belongs to the YjjX NTPase family. In terms of assembly, homodimer. It depends on Mg(2+) as a cofactor. Mn(2+) serves as cofactor.

The catalysed reaction is XTP + H2O = XDP + phosphate + H(+). It carries out the reaction ITP + H2O = IDP + phosphate + H(+). Functionally, phosphatase that hydrolyzes non-canonical purine nucleotides such as XTP and ITP to their respective diphosphate derivatives. Probably excludes non-canonical purines from DNA/RNA precursor pool, thus preventing their incorporation into DNA/RNA and avoiding chromosomal lesions. In Pyrobaculum islandicum (strain DSM 4184 / JCM 9189 / GEO3), this protein is Probable inosine/xanthosine triphosphatase.